We begin with the raw amino-acid sequence, 92 residues long: PqqA binding protein (92 aa).

Belongs to the PqqD family. As to quaternary structure, monomer. Interacts with PqqE.

It functions in the pathway cofactor biosynthesis; pyrroloquinoline quinone biosynthesis. Its function is as follows. Functions as a PqqA binding protein and presents PqqA to PqqE, in the pyrroloquinoline quinone (PQQ) biosynthetic pathway. This Azotobacter vinelandii (strain DJ / ATCC BAA-1303) protein is PqqA binding protein.